A 1785-amino-acid polypeptide reads, in one-letter code: Plexin-2 (1785 aa).

The signal sequence occupies residues 1–17 (MLPESVFLLLISHFLRA). The 427-residue stretch at 18–444 (VTQPPFETEG…MPYGIILEEL (427 aa)) folds into the Sema domain. Residues 18 to 1139 (VTQPPFETEG…SDHALPSRLS (1122 aa)) lie on the Extracellular side of the membrane. The N-linked (GlcNAc...) asparagine glycan is linked to asparagine 66. Cystine bridges form between cysteine 84-cysteine 91, cysteine 118-cysteine 126, cysteine 247-cysteine 349, cysteine 263-cysteine 300, cysteine 318-cysteine 336, cysteine 447-cysteine 464, cysteine 453-cysteine 487, cysteine 456-cysteine 473, and cysteine 467-cysteine 479. N-linked (GlcNAc...) asparagine glycosylation occurs at asparagine 249. The PSI 1 domain occupies 446–488 (TCSHHSSCTECLVSVDPLCQWCHPTQSCTTSARCTSPVTSQCP). 3 N-linked (GlcNAc...) asparagine glycosylation sites follow: asparagine 502, asparagine 536, and asparagine 572. A disulfide bridge connects residues cysteine 524 and cysteine 544. Residues 577 to 617 (DCSGYGTCSSCMSSEYNCAWCSGLHKCSNSCGALEKSKACV) form the PSI 2 domain. N-linked (GlcNAc...) asparagine glycosylation is found at asparagine 679 and asparagine 702. The 42-residue stretch at 707-748 (SCTNLASDCSSCLALSPSLSCGWCNRQCSHECHESKATAVCD) folds into the PSI 3 domain. 3 IPT/TIG domains span residues 750–837 (PRID…LYSF), 840–924 (TSIF…PFEY), and 928–1040 (PSIS…LSPF). Residues asparagine 864, asparagine 886, asparagine 984, and asparagine 1016 are each glycosylated (N-linked (GlcNAc...) asparagine). A helical transmembrane segment spans residues 1140 to 1160 (LLILGLLLFIVVTLTVMCLVF). A coiled-coil region spans residues 1159–1197 (VFKRRRQEREKEYRKIQLQMENLENNVRKECKQAFAELQ). Topologically, residues 1161 to 1785 (KRRRQEREKE…HIYSTISDYE (625 aa)) are cytoplasmic.

The protein belongs to the plexin family. Interacts with mab-20. As to expression, expressed predominantly in the central nervous system from embryonic to adult stages. Expressed in early embryos in ventral neuroblasts. Expressed in neurons and in a subset of posterior lateral and ventral epidermal cells following epidermal enclosure. Present in neurons, muscles and weakly expressed in epidermal cells of the larval tail.

The protein localises to the cell membrane. In terms of biological role, involved as a receptor for mab-20/sema-2a in the formation or stabilization of cell-cell contacts at several stages of epithelial morphogenesis. In early embryonic development, required for proper ventral closure of the epidermis. During male tail morphogenesis, involved in precursor cell sorting and in the formation of distinct sensory rays. Involved in axon guidance of SDQL neurons during neurogenesis. Probably in response to stimulation by mab-20, regulates fln-1-mediated remodeling of the actin cytoskeleton and thus axon guidance and/or fasciculation of DD/VD neurons. The sequence is that of Plexin-2 from Caenorhabditis elegans.